A 129-amino-acid polypeptide reads, in one-letter code: Histone H2A.J (129 aa).

The segment at 1-22 is disordered; sequence MSGRGKQGGKVRAKAKSRSSRA. N6-acetyllysine is present on residues Lys-6 and Lys-10. A compositionally biased stretch (basic residues) spans 7–19; that stretch reads QGGKVRAKAKSRS. N6-lactoyllysine; alternate is present on Lys-10. An N5-methylglutamine modification is found at Gln-105. A Phosphothreonine; by DCAF1 modification is found at Thr-121.

It belongs to the histone H2A family. In terms of assembly, the nucleosome is a histone octamer containing two molecules each of H2A, H2B, H3 and H4 assembled in one H3-H4 heterotetramer and two H2A-H2B heterodimers. The octamer wraps approximately 147 bp of DNA. In terms of processing, glutamine methylation at Gln-105 (H2AQ104me) by FBL is specifically dedicated to polymerase I. It is present at 35S ribosomal DNA locus and impairs binding of the FACT complex. Monoubiquitination of Lys-120 (H2AXK119ub) gives a specific tag for epigenetic transcriptional repression. Following DNA double-strand breaks (DSBs), it is ubiquitinated through 'Lys-63' linkage of ubiquitin moieties. Post-translationally, phosphorylation on Ser-2 (H2AS1ph) is enhanced during mitosis. Phosphorylation on Ser-2 by RPS6KA5/MSK1 directly represses transcription. Acetylation of H3 inhibits Ser-2 phosphorylation by RPS6KA5/MSK1. Phosphorylation at Thr-121 (H2AT120ph) by DCAF1 is present in the regulatory region of many tumor suppresor genes and down-regulates their transcription.

It localises to the nucleus. It is found in the chromosome. Its function is as follows. Core component of nucleosome. Nucleosomes wrap and compact DNA into chromatin, limiting DNA accessibility to the cellular machineries which require DNA as a template. Histones thereby play a central role in transcription regulation, DNA repair, DNA replication and chromosomal stability. DNA accessibility is regulated via a complex set of post-translational modifications of histones, also called histone code, and nucleosome remodeling. The polypeptide is Histone H2A.J (Bos taurus (Bovine)).